The chain runs to 674 residues: DNA-directed RNA polymerase subunit beta' (674 aa).

Cys-69, Cys-71, Cys-87, and Cys-90 together coordinate Zn(2+). Residues Asp-494, Asp-496, and Asp-498 each coordinate Mg(2+).

The protein belongs to the RNA polymerase beta' chain family. RpoC1 subfamily. In terms of assembly, in plastids the minimal PEP RNA polymerase catalytic core is composed of four subunits: alpha, beta, beta', and beta''. When a (nuclear-encoded) sigma factor is associated with the core the holoenzyme is formed, which can initiate transcription. Mg(2+) is required as a cofactor. The cofactor is Zn(2+).

The protein resides in the plastid. It localises to the chloroplast. The catalysed reaction is RNA(n) + a ribonucleoside 5'-triphosphate = RNA(n+1) + diphosphate. Functionally, DNA-dependent RNA polymerase catalyzes the transcription of DNA into RNA using the four ribonucleoside triphosphates as substrates. In Psilotum nudum (Whisk fern), this protein is DNA-directed RNA polymerase subunit beta'.